The chain runs to 571 residues: Glycine--tRNA ligase (571 aa).

The substrate site is built by arginine 99 and glutamate 165. ATP contacts are provided by residues 197 to 199 (RNE), 207 to 212 (IRLREF), 324 to 325 (EC), and 443 to 446 (GIDR). Position 212 to 216 (212 to 216 (FTQAE)) interacts with substrate. Residue 439–443 (EPSFG) participates in substrate binding.

Belongs to the class-II aminoacyl-tRNA synthetase family.

It localises to the cytoplasm. The enzyme catalyses tRNA(Gly) + glycine + ATP = glycyl-tRNA(Gly) + AMP + diphosphate. Catalyzes the attachment of glycine to tRNA(Gly). In Pyrococcus abyssi (strain GE5 / Orsay), this protein is Glycine--tRNA ligase.